We begin with the raw amino-acid sequence, 1147 residues long: MFTLSLLSRGHGKLVQNKQKLEVYFEPEDYLNWKSPEDYILVRKPQDEGNADQHTWSLFLPKTFSTRKGALILYSEGLAISAWTPEERRKGPYRPKGRRKRPDLELHTLQDLKEAILAYGRRQREQDRAWQPYLHFRSQPESQGLRQIQPGYSAKRYLRGLLRTWPPGTINKLQCAGYIKDSVLLQDSQLNVPKNLRPQQDLSGVPLKYHLLPVFPPFWIQQGKSFGQGQQDLDEGEAGAGGQVDQGSVVKDRGIQGTCLPPLKKQPWQKDETQTEDTSKDNHHCIHTSKENHQEKAQQTSRRTLGHALFDHSWLLHDKSHTTFYYGGTFPNRKADLSDKQGTMKLHQGRSSHLFKEPPAERCLFPPVASAAGSEKNMPGDMKKKKAPKALKLPLISEEPPRVLDPLRSQLKASEPPAELFIFPVEIHYHSQHPPKGKAQRRGAPQPESAPETEEYTSSWRPPLKQVSLRGSRALRVHLPMDTDRDTLSPQEDVAPPQKGTSSPSLRKGKKSPESQRGPDSPRTSGRSSPTGPPCERPAGGALPAAGQAYESVSSNAGHGEEESSIQHLLKVNTESRTDLHMNLNETSPLTQKPENQGAQQSLEAAAQKTGEPQSCINKGLICSNRKEFYTRKLHLDMTPFLKASREEMDDHEEGGELRENHPDAQDPVRRNMTLDPLCASLAKHMQTPEADTVQKASKDYNVHHRHRGLSGHGPDSPEGLDPIDTSFLPRGKEGKTEPRLFNQKTSNNISNEMELIEKAKSRKRAKTDKSKAPKREKEGKLHEEAEAAVGKSKESKAEKKSQLISKGKKTGAKGKRTRKEGNLETAAELSGPDGINSKETKDRSGGGFFRSGSGVEDPWVSSKVEAPESQVSIDGRSSPTQTAAVPGNMEPEEDRSHEDPSKAFLVKREQEKASRDRLRAERAEMRRLEVERKRREQEEQRRLQQEQLERAERMKEELELEQQRRVEEIRLRKQRLEEERQWQEEEERRQWLQLQMAQERARQQQEEFRRKCQELQRKKQQEEAERAEAEKQRLKELEMQLAEEQKHLMEMAEEERLEYQRRKQEAEEKTRWEAEDRRQKEKEAARLAQEEAMKQAQDQARQKDALKKHLHFHQELHKEASGLQWTHNISRPWVYSYFHFLQIPRP.

Disordered regions lie at residues 226 to 245 (FGQG…GQVD), 255 to 297 (IQGT…QEKA), 431 to 617 (SQHP…QSCI), 647 to 670 (EEMD…DPVR), 705 to 945 (HRHR…RRLQ), 1003 to 1032 (RQQQ…EAEK), and 1060 to 1090 (YQRR…RLAQ). Positions 268 to 296 (WQKDETQTEDTSKDNHHCIHTSKENHQEK) are enriched in basic and acidic residues. Positions 431 to 441 (SQHPPKGKAQR) are enriched in basic residues. Residues 538 to 549 (PAGGALPAAGQA) show a composition bias toward low complexity. Over residues 584-603 (LNETSPLTQKPENQGAQQSL) the composition is skewed to polar residues. Over residues 743 to 752 (NQKTSNNISN) the composition is skewed to polar residues. Positions 743 to 804 (NQKTSNNISN…ESKAEKKSQL (62 aa)) form a coiled coil. The span at 768–802 (TDKSKAPKREKEGKLHEEAEAAVGKSKESKAEKKS) shows a compositional bias: basic and acidic residues. Residues 807-819 (KGKKTGAKGKRTR) are compositionally biased toward basic residues. The span at 870–884 (SQVSIDGRSSPTQTA) shows a compositional bias: polar residues. Positions 895–945 (DRSHEDPSKAFLVKREQEKASRDRLRAERAEMRRLEVERKRREQEEQRRLQ) are enriched in basic and acidic residues. Positions 907 to 1112 (VKREQEKASR…QKDALKKHLH (206 aa)) form a coiled coil.

This is an uncharacterized protein from Bos taurus (Bovine).